We begin with the raw amino-acid sequence, 958 residues long: UPF0182 protein TW644 (958 aa).

7 consecutive transmembrane segments (helical) span residues 14–34 (IAIL…FFLV), 59–79 (IFVV…LCMF), 107–127 (KIVV…FAAS), 166–186 (LFFL…ISVV), 205–225 (VQYA…FWLN), 249–269 (LIPG…LFCI), and 280–300 (IIGV…LPWG).

The protein belongs to the UPF0182 family.

Its subcellular location is the cell membrane. The protein is UPF0182 protein TW644 of Tropheryma whipplei (strain TW08/27) (Whipple's bacillus).